The primary structure comprises 136 residues: uncharacterized protein (136 aa).

Residues 74–97 are disordered; sequence RADPGRKGRTQPLPTQGSARRFLH.

This is an uncharacterized protein from Saccharomyces cerevisiae (strain ATCC 204508 / S288c) (Baker's yeast).